Reading from the N-terminus, the 143-residue chain is Transcriptional regulator MraZ (143 aa).

2 consecutive SpoVT-AbrB domains span residues 5 to 47 (EYQH…PKEE) and 76 to 119 (AGEC…SRER).

Belongs to the MraZ family. In terms of assembly, forms oligomers.

The protein resides in the cytoplasm. It localises to the nucleoid. The chain is Transcriptional regulator MraZ from Heliobacterium modesticaldum (strain ATCC 51547 / Ice1).